The sequence spans 308 residues: Ribosomal RNA small subunit methyltransferase H (308 aa).

S-adenosyl-L-methionine-binding positions include Ala-32–His-34, Asp-51, Phe-78, Asp-99, and Gln-106.

Belongs to the methyltransferase superfamily. RsmH family.

The protein localises to the cytoplasm. It carries out the reaction cytidine(1402) in 16S rRNA + S-adenosyl-L-methionine = N(4)-methylcytidine(1402) in 16S rRNA + S-adenosyl-L-homocysteine + H(+). In terms of biological role, specifically methylates the N4 position of cytidine in position 1402 (C1402) of 16S rRNA. This is Ribosomal RNA small subunit methyltransferase H from Mesoplasma florum (strain ATCC 33453 / NBRC 100688 / NCTC 11704 / L1) (Acholeplasma florum).